Here is a 188-residue protein sequence, read N- to C-terminus: MSSFIQNQFEQNFITTNVDHVFNWARKSALWPLTFGLACCAIEMIASSTSRFDIARFGAEVFRPSPRQSDLMIVAGTVTLKMAPVLKRIWDQMPDPKWCISMGACSSVGGPFNTYAVLQGVDKIVPVDVYVTGCPPRPENLFYALLKLQDKIDTMTTLVKRPTEVRLDETMLEEFKQQIRIAQIQNPA.

4 residues coordinate [4Fe-4S] cluster: C39, C40, C105, and C134.

It belongs to the complex I 20 kDa subunit family. In terms of assembly, NDH-1 is composed of 14 different subunits. Subunits NuoB, C, D, E, F, and G constitute the peripheral sector of the complex. It depends on [4Fe-4S] cluster as a cofactor.

Its subcellular location is the cell inner membrane. It carries out the reaction a quinone + NADH + 5 H(+)(in) = a quinol + NAD(+) + 4 H(+)(out). Functionally, NDH-1 shuttles electrons from NADH, via FMN and iron-sulfur (Fe-S) centers, to quinones in the respiratory chain. The immediate electron acceptor for the enzyme in this species is believed to be ubiquinone. Couples the redox reaction to proton translocation (for every two electrons transferred, four hydrogen ions are translocated across the cytoplasmic membrane), and thus conserves the redox energy in a proton gradient. The polypeptide is NADH-quinone oxidoreductase subunit B 1 (Solibacter usitatus (strain Ellin6076)).